Here is a 416-residue protein sequence, read N- to C-terminus: GTPase Obg (416 aa).

The Obg domain occupies 1-157 (MFQDVLVITV…RRLRLELMLI (157 aa)). Disordered stretches follow at residues 25-44 (EKFV…GGSV) and 62-82 (TYKA…RGGE). The span at 32-42 (GPDGGDGGRGG) shows a compositional bias: gly residues. Residues 63-72 (YKAEDGEHGR) show a composition bias toward basic and acidic residues. An OBG-type G domain is found at 158–324 (ADVGLVGYPN…LKEALHALVR (167 aa)). GTP contacts are provided by residues 164–171 (GYPNAGKS), 189–193 (FTTLS), 211–214 (DIPG), 277–280 (NKVD), and 305–307 (SAL). Mg(2+) is bound by residues Ser171 and Thr191. One can recognise an OCT domain in the interval 336–414 (PRKEVQAGVE…IGGLEFEYIP (79 aa)).

Belongs to the TRAFAC class OBG-HflX-like GTPase superfamily. OBG GTPase family. In terms of assembly, monomer. Mg(2+) serves as cofactor.

Its subcellular location is the cytoplasm. Functionally, an essential GTPase which binds GTP, GDP and possibly (p)ppGpp with moderate affinity, with high nucleotide exchange rates and a fairly low GTP hydrolysis rate. Plays a role in control of the cell cycle, stress response, ribosome biogenesis and in those bacteria that undergo differentiation, in morphogenesis control. This Thermus thermophilus (strain ATCC 27634 / DSM 579 / HB8) protein is GTPase Obg.